A 314-amino-acid chain; its full sequence is DNA-directed RNA polymerase subunit alpha (314 aa).

The tract at residues 1 to 228 (MIEFEKPKIH…EHLAIFVNLN (228 aa)) is alpha N-terminal domain (alpha-NTD). The tract at residues 245–314 (KEKMLEMTIE…LLGLGFRSED (70 aa)) is alpha C-terminal domain (alpha-CTD).

The protein belongs to the RNA polymerase alpha chain family. As to quaternary structure, homodimer. The RNAP catalytic core consists of 2 alpha, 1 beta, 1 beta' and 1 omega subunit. When a sigma factor is associated with the core the holoenzyme is formed, which can initiate transcription.

The enzyme catalyses RNA(n) + a ribonucleoside 5'-triphosphate = RNA(n+1) + diphosphate. DNA-dependent RNA polymerase catalyzes the transcription of DNA into RNA using the four ribonucleoside triphosphates as substrates. The protein is DNA-directed RNA polymerase subunit alpha of Pediococcus pentosaceus (strain ATCC 25745 / CCUG 21536 / LMG 10740 / 183-1w).